A 302-amino-acid chain; its full sequence is Recombination-associated protein RdgC (302 aa).

Belongs to the RdgC family.

The protein localises to the cytoplasm. It localises to the nucleoid. In terms of biological role, may be involved in recombination. The protein is Recombination-associated protein RdgC of Psychromonas ingrahamii (strain DSM 17664 / CCUG 51855 / 37).